The sequence spans 317 residues: MKRLSLVTTNRLSPQGNFLPLCTFPLAVDMAALFQEASSCPVCSDYLEKPMSLECGCTVCLKCINSLQKEPHGEDLLCCCCSMVSQRNKIRPNRQLERLVSHIKELEPKLKKILQMNPRMRKFQVDMTLDADTANNFLLISDDLRSVRSGLITQNRQDLAERFDVSVCILGSPRFTCGRHYWEVDVGTSTEWDLGVCRESVHCKGKIQLTTELGFWTVSLRDGSRLSASTVPLTFLLVDRKLQRVGIFLDMGMQNVSFFDAESGSHVYTFRSVSAEEPLRPFLAPSIPPNGDQGVLSICPLMNSGTTDAPVRPGEAK.

An RING-type zinc finger spans residues 40–82 (CPVCSDYLEKPMSLECGCTVCLKCINSLQKEPHGEDLLCCCCS). The B30.2/SPRY domain maps to 107-301 (EPKLKKILQM…DQGVLSICPL (195 aa)).

As to expression, expressed during neurogenesis in differentiating human embryonic stem cells and in the developing human neocortex.

It localises to the cytoplasm. It is found in the nucleus. Functionally, (Microbial infection) Stimulates the activity of Human Immunodeficiency Virus 1/HIV-1 pre-integration complex. This Homo sapiens (Human) protein is Ret finger protein-like 3 (RFPL3).